The primary structure comprises 214 residues: Thymidylate kinase (214 aa).

Position 10-17 (10-17 (GGEGAGKS)) interacts with ATP.

This sequence belongs to the thymidylate kinase family.

The enzyme catalyses dTMP + ATP = dTDP + ADP. Functionally, phosphorylation of dTMP to form dTDP in both de novo and salvage pathways of dTTP synthesis. The sequence is that of Thymidylate kinase from Brucella canis (strain ATCC 23365 / NCTC 10854 / RM-666).